A 206-amino-acid polypeptide reads, in one-letter code: Ras-related protein Ral-B (206 aa).

GTP is bound at residue 21–29; the sequence is GSGGVGKSA. An Effector region motif is present at residues 43 to 51; the sequence is YEPTKADSY. GTP-binding positions include 68-72, 128-131, and 158-160; these read DTAGQ, NKSD, and SAK. The segment at 181-206 is disordered; that stretch reads MSENKDKNGRKSGKSKKSFKERCCLL. A Cysteine methyl ester modification is found at Cys-203. The S-geranylgeranyl cysteine moiety is linked to residue Cys-203. Positions 204-206 are cleaved as a propeptide — removed in mature form; sequence CLL.

It belongs to the small GTPase superfamily. Ras family. Interacts with EXOC2/Sec5 and EXOC8/Exo84. Interacts (via effector domain) with RALBP1. In terms of processing, prenylation is essential for membrane localization. The farnesylated form confers resistance to the proapoptotic and anti-anchorage-dependent growth effects of some geranylgeranyltransferase I inhibitors.

It is found in the cell membrane. Its subcellular location is the midbody. It catalyses the reaction GTP + H2O = GDP + phosphate + H(+). Alternates between an inactive form bound to GDP and an active form bound to GTP. Activated by a guanine nucleotide-exchange factor (GEF) and inactivated by a GTPase-activating protein (GAP). Its function is as follows. Multifunctional GTPase involved in a variety of cellular processes including gene expression, cell migration, cell proliferation, oncogenic transformation and membrane trafficking. Accomplishes its multiple functions by interacting with distinct downstream effectors. Acts as a GTP sensor for GTP-dependent exocytosis of dense core vesicles. Required both to stabilize the assembly of the exocyst complex and to localize functional exocyst complexes to the leading edge of migrating cells. Required for suppression of apoptosis. In late stages of cytokinesis, upon completion of the bridge formation between dividing cells, mediates exocyst recruitment to the midbody to drive abscission. Involved in ligand-dependent receptor mediated endocytosis of the EGF and insulin receptors. The chain is Ras-related protein Ral-B (Ralb) from Rattus norvegicus (Rat).